Here is a 129-residue protein sequence, read N- to C-terminus: Small ribosomal subunit protein uS11 (129 aa).

Belongs to the universal ribosomal protein uS11 family. As to quaternary structure, part of the 30S ribosomal subunit. Interacts with proteins S7 and S18. Binds to IF-3.

In terms of biological role, located on the platform of the 30S subunit, it bridges several disparate RNA helices of the 16S rRNA. Forms part of the Shine-Dalgarno cleft in the 70S ribosome. The polypeptide is Small ribosomal subunit protein uS11 (Chelativorans sp. (strain BNC1)).